We begin with the raw amino-acid sequence, 143 residues long: Small ribosomal subunit protein bS18 (143 aa).

Residues 1–72 (MARPDMGGPK…RGGEEGGRRG (72 aa)) form a disordered region. Residues 10 to 50 (KSSGGFGGPRSGGGFGGGGYGGGGGGGGGYGGGGGGGFGGR) show a composition bias toward gly residues. A compositionally biased stretch (basic and acidic residues) spans 51-70 (GGDRGDRGDRDDRGGEEGGR).

This sequence belongs to the bacterial ribosomal protein bS18 family. Part of the 30S ribosomal subunit. Forms a tight heterodimer with protein bS6.

Functionally, binds as a heterodimer with protein bS6 to the central domain of the 16S rRNA, where it helps stabilize the platform of the 30S subunit. In Anaeromyxobacter sp. (strain Fw109-5), this protein is Small ribosomal subunit protein bS18.